The following is a 1001-amino-acid chain: Phosphoenolpyruvate carboxylase (1001 aa).

Active-site residues include His-189 and Lys-642.

This sequence belongs to the PEPCase type 1 family. Mg(2+) is required as a cofactor.

It catalyses the reaction oxaloacetate + phosphate = phosphoenolpyruvate + hydrogencarbonate. Forms oxaloacetate, a four-carbon dicarboxylic acid source for the tricarboxylic acid cycle. The chain is Phosphoenolpyruvate carboxylase from Prochlorococcus marinus (strain SARG / CCMP1375 / SS120).